A 35-amino-acid chain; its full sequence is Z-limacoditoxin(1)-Dv4 (35 aa).

A signal peptide spans 1-22 (MKKTFLPIFLVILLASYALGNP). At glutamine 23 the chain carries Pyrrolidone carboxylic acid. A Proline amide modification is found at proline 32.

It belongs to the limacoditoxin-1 (ACP-like) family. In terms of tissue distribution, expressed by the venom secretory cell of the spine. The spine is a cuticular structure containing a single large nucleated venom-secreting cell at its base. It is an independent unit capable of producing, storing and injecting venom. On the back of D.vulnerans caterpillars, spines are grouped together by 50 to 100 to form scoli, of which there are eight in D.vulnerans.

It is found in the secreted. Functionally, potently activates insect GPCR. More precisely, it activates the ACP receptor (ACPR) from the mosquito A.aegypti (EC(50)=3.07 nM) with a potency comparable to that of the endogenous ligand. Has no activity on receptors of the closely related neuropeptides adipokinetic hormone and corazonin. In vivo, does not reveal any observable effects when injected into crickets (A.domesticus). Does not induce increase in intracellular calcium in mouse DRG neurons, suggesting that it does not induce pain. The polypeptide is Z-limacoditoxin(1)-Dv4 (Doratifera vulnerans (Mottled cup moth)).